A 62-amino-acid polypeptide reads, in one-letter code: Defensin BmKDfsin3 (62 aa).

The first 24 residues, 1-24 (MKTIVILFVLALVFCTLEMGMVEA), serve as a signal peptide directing secretion. 3 cysteine pairs are disulfide-bonded: Cys28-Cys49, Cys35-Cys57, and Cys39-Cys59.

It belongs to the invertebrate defensin family. Type 2 subfamily. As to expression, low expression in both venom and non-venom glands (hemolymph).

It localises to the secreted. In terms of biological role, antibacterial peptide active against Gram-positive bacteria (including S.aureus ATCC25923 (MIC=2.5 uM), M.luteus AB93113 (MIC=2.5 uM), and the antibiotic-resistant S.epidermidis PRSE P1389 (MIC=1.25 uM)), but not against Gram-negative bacteria (including E.coli and P.aeruginosa). Also blocks the currents of Kv1.1/KCNA1 (57% inhibition), Kv1.2/KCNA2 (27.5% inhibition), Kv1.3/KCNA3 (IC(50)=23.4 nM, 84.3% inhibition), KCa3.1/KCNN4/IK (15% inhibition), KCa2.3/KCNN3/SK3 (87.5% inhibition) and Kv11.1/KCNH2/ERG1 (30.4% inhibition) channels (tested at 1 uM). It inhibits potassium channel current by interacting with the pore region. The polypeptide is Defensin BmKDfsin3 (Olivierus martensii (Manchurian scorpion)).